Reading from the N-terminus, the 121-residue chain is Large ribosomal subunit protein uL22c (121 aa).

It belongs to the universal ribosomal protein uL22 family. Part of the 50S ribosomal subunit.

The protein resides in the plastid. The protein localises to the chloroplast. Its function is as follows. This protein binds specifically to 23S rRNA. In terms of biological role, the globular domain of the protein is located near the polypeptide exit tunnel on the outside of the subunit, while an extended beta-hairpin is found that lines the wall of the exit tunnel in the center of the 70S ribosome. The polypeptide is Large ribosomal subunit protein uL22c (rpl22) (Welwitschia mirabilis (Tree tumbo)).